Here is a 118-residue protein sequence, read N- to C-terminus: Phosphoribosyl-AMP cyclohydrolase (118 aa).

Asp-87 is a binding site for Mg(2+). Zn(2+) is bound at residue Cys-88. Mg(2+) contacts are provided by Asp-89 and Asp-91. The Zn(2+) site is built by Cys-104 and Cys-111.

Belongs to the PRA-CH family. As to quaternary structure, homodimer. The cofactor is Mg(2+). Zn(2+) is required as a cofactor.

It is found in the cytoplasm. It carries out the reaction 1-(5-phospho-beta-D-ribosyl)-5'-AMP + H2O = 1-(5-phospho-beta-D-ribosyl)-5-[(5-phospho-beta-D-ribosylamino)methylideneamino]imidazole-4-carboxamide. The protein operates within amino-acid biosynthesis; L-histidine biosynthesis; L-histidine from 5-phospho-alpha-D-ribose 1-diphosphate: step 3/9. Catalyzes the hydrolysis of the adenine ring of phosphoribosyl-AMP. This is Phosphoribosyl-AMP cyclohydrolase from Corynebacterium glutamicum (strain R).